Here is a 286-residue protein sequence, read N- to C-terminus: Pantothenate synthetase (286 aa).

30–37 contacts ATP; sequence MGNLHSGH. His-37 (proton donor) is an active-site residue. Gln-61 lines the (R)-pantoate pocket. Residue Gln-61 participates in beta-alanine binding. An ATP-binding site is contributed by 149-152; sequence GQKD. Residue Gln-155 coordinates (R)-pantoate. Residues Val-178 and 186–189 contribute to the ATP site; that span reads LSSR.

This sequence belongs to the pantothenate synthetase family. As to quaternary structure, homodimer.

The protein resides in the cytoplasm. It carries out the reaction (R)-pantoate + beta-alanine + ATP = (R)-pantothenate + AMP + diphosphate + H(+). The protein operates within cofactor biosynthesis; (R)-pantothenate biosynthesis; (R)-pantothenate from (R)-pantoate and beta-alanine: step 1/1. In terms of biological role, catalyzes the condensation of pantoate with beta-alanine in an ATP-dependent reaction via a pantoyl-adenylate intermediate. The protein is Pantothenate synthetase of Pseudomonas fluorescens (strain Pf0-1).